The chain runs to 1583 residues: Protein mesh (1583 aa).

Positions 1–21 are cleaved as a signal peptide; it reads MGVKIKLVLAVVLILSANVLG. The Extracellular portion of the chain corresponds to 22–1182; sequence QDEIVNDTES…EFSQRALFLT (1161 aa). An NIDO domain is found at 260–415; the sequence is GIYFRLDRDL…GRHIFRIDEN (156 aa). In terms of domain architecture, AMOP spans 647 to 798; that stretch reads GQRWSNSMCN…VGCETFRFER (152 aa). The VWFD domain occupies 811–1019; it reads GVAGIFGDPH…HWQLTDREQR (209 aa). Residues 1110–1170 enclose the Sushi domain; sequence ISCGILETPR…PDYGYTECLR (61 aa). 2 cysteine pairs are disulfide-bonded: Cys-1112-Cys-1152 and Cys-1138-Cys-1168. The helical transmembrane segment at 1183 to 1203 threads the bilayer; sequence WGVIVAVILPLGLLICLLWFW. Topologically, residues 1204–1472 are cytoplasmic; that stretch reads CWHKPRSEGK…QEYSSRTLGA (269 aa). Over residues 1232–1250 the composition is skewed to polar residues; it reads LRSSSMGNITDTMKSSTIP. Residues 1232-1448 form a disordered region; it reads LRSSSMGNIT…IPEAPKSAPV (217 aa). Over residues 1291-1300 the composition is skewed to basic and acidic residues; that stretch reads GKSDSGKSDK. The span at 1405–1416 shows a compositional bias: polar residues; it reads PIPSQYSPTYSE. The chain crosses the membrane as a helical span at residues 1473-1493; the sequence is TWGIISAVMLPIIIILICVAW. Over 1494-1583 the chain is Extracellular; it reads RILQRRKAEE…RQWGGETEIN (90 aa). The segment covering 1521-1539 has biased composition (basic and acidic residues); it reads DSVKVTSDDESIPYKKDVT. The interval 1521-1583 is disordered; the sequence is DSVKVTSDDE…RQWGGETEIN (63 aa).

As to expression, in fifth instar larvae, expressed in midgut epithelial cells (at protein level).

It is found in the membrane. The protein localises to the cell junction. Its subcellular location is the septate junction. The protein resides in the lateral cell membrane. May be required for the proper organization of smooth septate junctions and for the barrier function of the midgut epithelium. The sequence is that of Protein mesh from Bombyx mori (Silk moth).